The chain runs to 265 residues: Molybdenum-pterin-binding protein MopA (265 aa).

2 Mop domains span residues 126–192 (RTSN…MLAA) and 198–264 (RISA…ILAM).

It belongs to the ModE family.

The chain is Molybdenum-pterin-binding protein MopA (mopA) from Rhodobacter capsulatus (Rhodopseudomonas capsulata).